We begin with the raw amino-acid sequence, 87 residues long: Transcriptional regulator PINT87aa (87 aa).

In terms of assembly, interacts with PAF1 complex member PAF1. Interacts with transcription factor FOXM1. As to expression, expressed in brain, liver, kidney and stomach with lower levels in breast, intestine, thyroid and pancreas.

The protein localises to the nucleus. Enhances the binding of the PAF1 complex to target gene promoters and plays a role in negative regulation of transcription. May function as an anchor to keep the PAF1 complex on target gene promoters, sequentially pausing RNA polymerase II-induced mRNA elongation. Inhibits FOXM1-mediated transcription of PHB2. The protein is Transcriptional regulator PINT87aa of Homo sapiens (Human).